The sequence spans 78 residues: Large ribosomal subunit protein uL29 (78 aa).

The protein belongs to the universal ribosomal protein uL29 family.

In Rhodococcus opacus (strain B4), this protein is Large ribosomal subunit protein uL29.